Here is a 135-residue protein sequence, read N- to C-terminus: Fatty acid-binding protein 5 (135 aa).

At Ala-2 the chain carries N-acetylalanine. Ser-3 carries the post-translational modification Phosphoserine. The short motif at 24-34 (KELGVGLALRK) is the Nuclear localization signal element. Cys-43 and Arg-109 together coordinate N-eicosanoyl ethanolamine. Cys-120 and Cys-127 are joined by a disulfide. 129 to 131 (RVY) lines the (9Z,12Z)-octadecadienoate pocket. Tyr-131 contacts N-eicosanoyl ethanolamine. Tyr-131 is a binding site for hexadecanoate. The residue at position 131 (Tyr-131) is a Phosphotyrosine.

It belongs to the calycin superfamily. Fatty-acid binding protein (FABP) family. As to quaternary structure, monomer.

The protein resides in the cytoplasm. Its subcellular location is the nucleus. It localises to the synapse. It is found in the postsynaptic density. The protein localises to the secreted. It catalyses the reaction hexadecanoate(out) = hexadecanoate(in). It carries out the reaction (9Z,12Z)-octadecadienoate(out) = (9Z,12Z)-octadecadienoate(in). The catalysed reaction is (9Z)-octadecenoate(out) = (9Z)-octadecenoate(in). Functionally, intracellular carrier for long-chain fatty acids and related active lipids, such as endocannabinoids, that regulate the metabolism and actions of the ligands they bind. In addition to the cytosolic transport, selectively delivers specific fatty acids from the cytosol to the nucleus, wherein they activate nuclear receptors. Delivers retinoic acid to the nuclear receptor peroxisome proliferator-activated receptor delta; which promotes proliferation and survival. May also serve as a synaptic carrier of endocannabinoid at central synapses and thus controls retrograde endocannabinoid signaling. Modulates inflammation by regulating PTGES induction via NF-kappa-B activation, and prostaglandin E2 (PGE2) biosynthesis during inflammation. The chain is Fatty acid-binding protein 5 from Rattus norvegicus (Rat).